The following is a 463-amino-acid chain: Zinc finger protein interacting with ribonucleoprotein K (463 aa).

The KRAB domain occupies 14–89; sequence VTFQDVAICF…PKTNLCEKCV (76 aa). 2 disordered regions span residues 106-128 and 171-211; these read HSTE…KPLE and KYRK…TSNG. Basic and acidic residues predominate over residues 174-191; that stretch reads KSTEGRKETSHESDKSEE. Positions 192–201 are enriched in polar residues; the sequence is CQSLSSQKQT. 9 consecutive C2H2-type zinc fingers follow at residues 215 to 237, 243 to 265, 271 to 293, 299 to 321, 327 to 349, 355 to 377, 383 to 405, 411 to 433, and 439 to 461; these read YECS…QRVH, WECR…RRIH, YECS…QKTH, YECS…KRVH, YKCS…RRIH, YECR…QRVH, YECS…QVVH, and YECD…QKCH.

It belongs to the krueppel C2H2-type zinc-finger protein family. Interacts with HNRPK. In terms of tissue distribution, expressed in ovary and liver, and at lower levels in brain and muscle.

The protein resides in the nucleus. May be a transcriptional repressor. This is Zinc finger protein interacting with ribonucleoprotein K (Zik1) from Mus musculus (Mouse).